The primary structure comprises 38 residues: Odorant-binding protein 2 (38 aa).

This sequence belongs to the calycin superfamily. Lipocalin family. Nasal mucosa.

Its subcellular location is the secreted. It is found in the extracellular space. This soluble protein may play a specific role in odor discrimination and perception. This is Odorant-binding protein 2 from Hystrix cristata (North African crested porcupine).